Here is a 909-residue protein sequence, read N- to C-terminus: Myb-like protein Q (909 aa).

Disordered stretches follow at residues 15-65 (TTNN…QQQQ), 84-149 (QQQN…QQIL), and 216-280 (SAPS…KGPW). Positions 17-46 (NNNSNNNNNNNNNNNNNNNNNNNNNINQNH) are enriched in low complexity. Over residues 47–56 (QHQHQHHHHQ) the composition is skewed to basic residues. The span at 84 to 126 (QQQNYGESTTSTSMIPPSITTSLTPLTPTLSSQPQNIQQQQQQ) shows a compositional bias: low complexity. A compositionally biased stretch (basic residues) spans 127–139 (QHHHQQQHHHHHQ). Over residues 216–226 (SAPSTPLSMSP) the composition is skewed to polar residues. HTH myb-type domains are found at residues 272 to 327 (SPGI…SPEV) and 328 to 378 (RKTN…LKKI). DNA-binding regions (H-T-H motif) lie at residues 300–323 (WSSI…FNHL) and 351–374 (WTAI…NSTL). The span at 379–389 (GGDSKSLNKEK) shows a compositional bias: basic and acidic residues. Disordered stretches follow at residues 379 to 482 (GGDS…NTAI), 497 to 531 (QTTP…QTQQ), 616 to 642 (SMEQ…QQQQ), 672 to 748 (YQQQ…HPIE), and 826 to 855 (LNTT…IPTP). Over residues 390-401 (DDDDDDDEDAED) the composition is skewed to acidic residues. Composition is skewed to low complexity over residues 415–431 (SSSS…TNSS) and 444–482 (STTT…NTAI). Residues 497–508 (QTTPNSSPSLSS) show a composition bias toward polar residues. Low complexity-rich tracts occupy residues 622-642 (YQQQ…QQQQ), 672-726 (YQQQ…QQQQ), 733-744 (NSNNTDTTFSNS), and 826-851 (LNTT…NNNN).

The protein resides in the nucleus. The sequence is that of Myb-like protein Q (mybQ) from Dictyostelium discoideum (Social amoeba).